A 327-amino-acid polypeptide reads, in one-letter code: GTPase Obg (327 aa).

Residues 3-160 (NKFTDFIKIY…FIFVLELKIL (158 aa)) form the Obg domain. The OBG-type G domain maps to 161–327 (ADVGLIGLPN…LIYYICNILS (167 aa)). GTP is bound by residues 167–174 (GLPNSGKS), 192–196 (FTTLN), 214–217 (DIPG), 281–284 (SKSD), and 308–310 (SSF). Residues Ser-174 and Thr-194 each coordinate Mg(2+).

The protein belongs to the TRAFAC class OBG-HflX-like GTPase superfamily. OBG GTPase family. Monomer. Mg(2+) is required as a cofactor.

The protein localises to the cytoplasm. Its function is as follows. An essential GTPase which binds GTP, GDP and possibly (p)ppGpp with moderate affinity, with high nucleotide exchange rates and a fairly low GTP hydrolysis rate. Plays a role in control of the cell cycle, stress response, ribosome biogenesis and in those bacteria that undergo differentiation, in morphogenesis control. The protein is GTPase Obg of Karelsulcia muelleri (strain GWSS) (Sulcia muelleri).